A 307-amino-acid polypeptide reads, in one-letter code: Junctional adhesion molecule 2A (307 aa).

Positions 1-18 (MLVCVSLLILIHSVPVSP) are cleaved as a signal peptide. The Ig-like V-type domain occupies 19–112 (VTVSSRNPKV…EVSAPSDSIS (94 aa)). Topologically, residues 19-226 (VTVSSRNPKV…FQTHDLNVAA (208 aa)) are extracellular. 2 disulfides stabilise this stretch: Cys40/Cys102 and Cys147/Cys197. The 100-residue stretch at 126–225 (PQTPSCDVPS…TFQTHDLNVA (100 aa)) folds into the Ig-like C2-type domain. The chain crosses the membrane as a helical span at residues 227 to 247 (VVSAVVLVCVILFLCAFGVCL). Over 248–307 (AHRQGYFSRHRGRSFWIPHCHGVTHISSQNLNPSEHTQHSGYSHPPKEPQDFKHTQSFML) the chain is Cytoplasmic. Residues 278-288 (LNPSEHTQHSG) are compositionally biased toward polar residues. The segment at 278–307 (LNPSEHTQHSGYSHPPKEPQDFKHTQSFML) is disordered. Residues 292-301 (PPKEPQDFKH) are compositionally biased toward basic and acidic residues.

It belongs to the immunoglobulin superfamily.

Its subcellular location is the cell membrane. The protein localises to the cell junction. The protein resides in the tight junction. In terms of biological role, junctional adhesion protein that mediates heterotypic cell-cell interactions to regulate different cellular processes. During myogenesis, it is involved in myocyte fusion through the binding of jam3b on neighboring myocytes. The chain is Junctional adhesion molecule 2A (jam2a) from Danio rerio (Zebrafish).